The sequence spans 22 residues: SNVCFNACMKISSSQKTCQILC.

Post-translationally, contains 2 disulfide bonds. As to expression, expressed by the venom gland.

The protein localises to the secreted. Its function is as follows. Not lethal to mice by intraperitoneal or intracerebroventricular injections in doses up to 150 micrograms. This Heterometrus spinifer (Asia giant forest scorpion) protein is 2.4 kDa venom peptide.